We begin with the raw amino-acid sequence, 225 residues long: ATP-dependent Clp protease proteolytic subunit (225 aa).

The active-site Nucleophile is Ser123. Residue His148 is part of the active site.

It belongs to the peptidase S14 family. In terms of assembly, fourteen ClpP subunits assemble into 2 heptameric rings which stack back to back to give a disk-like structure with a central cavity, resembling the structure of eukaryotic proteasomes.

The protein resides in the cytoplasm. The enzyme catalyses Hydrolysis of proteins to small peptides in the presence of ATP and magnesium. alpha-casein is the usual test substrate. In the absence of ATP, only oligopeptides shorter than five residues are hydrolyzed (such as succinyl-Leu-Tyr-|-NHMec, and Leu-Tyr-Leu-|-Tyr-Trp, in which cleavage of the -Tyr-|-Leu- and -Tyr-|-Trp bonds also occurs).. Its function is as follows. Cleaves peptides in various proteins in a process that requires ATP hydrolysis. Has a chymotrypsin-like activity. Plays a major role in the degradation of misfolded proteins. The protein is ATP-dependent Clp protease proteolytic subunit of Chlorobium phaeovibrioides (strain DSM 265 / 1930) (Prosthecochloris vibrioformis (strain DSM 265)).